The chain runs to 79 residues: MTVTPKQIYNYTVLLEKELDGGYHAFCPMLKGCHSQGDTFEEAIQNITEAIELYIESLIAEHQPVPKEDLIVKPLSILV.

The protein belongs to the UPF0150 family.

This Synechocystis sp. (strain ATCC 27184 / PCC 6803 / Kazusa) protein is UPF0150 protein ssr1765.